A 694-amino-acid chain; its full sequence is Lon-like protease BrxL (694 aa).

The protein belongs to the BrxL family.

Its function is as follows. BREX systems (bacteriophage exclusion) provide immunity against bacteriophage. Part of a type 1 BREX system which protects against dsDNA phage. This system allows phage adsorption but prevents phage DNA replication, without degradation of the phage DNA. Methylation of bacterial DNA by PglX guides self/non-self discrimination. When the brxA-brxB-brxC-pglX-pglZ-brxL genes are transformed into a susceptible E.coli strain (BW25113) they confer very high resistance to infection by bacteriophage VR7 and VpaE1, about 100-fold protection against lambda, T5 and T7 and no protection against RNA phage Qbeta, ssDNA phage M13 or dSDNA phage T4 and VR5. Glycosylated phage DNA is not susceptible to BREX. The BREX system does not confer resistance to lysogenic lambda phage, i.e. prophage that are integrated into the chromosomal DNA and then induced to form phage. Expression of this protein alone is toxic. This is Lon-like protease BrxL from Escherichia coli O9:H4 (strain HS).